Reading from the N-terminus, the 374-residue chain is Mannitol-1-phosphate 5-dehydrogenase (374 aa).

3–14 is a binding site for NAD(+); the sequence is AIHFGAGNIGRG.

It belongs to the mannitol dehydrogenase family.

The catalysed reaction is D-mannitol 1-phosphate + NAD(+) = beta-D-fructose 6-phosphate + NADH + H(+). This chain is Mannitol-1-phosphate 5-dehydrogenase, found in Halalkalibacterium halodurans (strain ATCC BAA-125 / DSM 18197 / FERM 7344 / JCM 9153 / C-125) (Bacillus halodurans).